The following is a 189-amino-acid chain: Elongation factor P (189 aa).

It belongs to the elongation factor P family.

It is found in the cytoplasm. The protein operates within protein biosynthesis; polypeptide chain elongation. Functionally, involved in peptide bond synthesis. Stimulates efficient translation and peptide-bond synthesis on native or reconstituted 70S ribosomes in vitro. Probably functions indirectly by altering the affinity of the ribosome for aminoacyl-tRNA, thus increasing their reactivity as acceptors for peptidyl transferase. This is Elongation factor P from Rhizobium meliloti (strain 1021) (Ensifer meliloti).